Here is a 505-residue protein sequence, read N- to C-terminus: Neuronal acetylcholine receptor subunit alpha-3 (505 aa).

Positions 1–31 (MGSGPLSLPLALSPPRLLLLLLLSLLPVARA) are cleaved as a signal peptide. At 32–250 (SEAEHRLFER…PLFYTINLII (219 aa)) the chain is on the extracellular side. 2 N-linked (GlcNAc...) asparagine glycosylation sites follow: Asn55 and Asn172. Intrachain disulfides connect Cys159/Cys173 and Cys223/Cys224. A helical membrane pass occupies residues 251–266 (PCLLISFLTVLVFYLP). The Cytoplasmic portion of the chain corresponds to 267–268 (SD). Residues 269-285 (CGEKVTLCISVLLSLTV) traverse the membrane as a helical segment. Topologically, residues 286–307 (FLLVITETIPSTSLVIPLIGEY) are extracellular. A helical membrane pass occupies residues 308 to 326 (LLFTMIFVTLSIVITVFVL). Topologically, residues 327 to 474 (NVHYRTPTTH…QDDWKYVAMV (148 aa)) are cytoplasmic. Residues Ser413 and Ser416 each carry the phosphoserine modification. The chain crosses the membrane as a helical span at residues 475-493 (IDRIFLWVFTLVCILGTAG). At 494-505 (LFLQPLMAREDA) the chain is on the extracellular side.

The protein belongs to the ligand-gated ion channel (TC 1.A.9) family. Acetylcholine receptor (TC 1.A.9.1) subfamily. Alpha-3/CHRNA3 sub-subfamily. In terms of assembly, neuronal AChR is composed of two different types of subunits: alpha and beta. CHRNA3/Alpha-3 subunit can be combined to CHRNA5/alpha-5, CHRNB2/beta-2 CHRNB3/beta-3 or CHRNB4/beta-4 to give rise to functional receptors. Forms stoichiometries such as (CHRNA3)2:(CHRNB4)3 or (CHRNA3:CHRNB4)2:CHRNB3. Part of a complex composed of STUB1/CHIP, VCP/p97, CHRNA3, and UBXN2A that modulates the ubiquitination and endoplasmic reticulum-associated degradation (ERAD) of CHRNA3. Within the complex UBXN2A acts as a scaffold protein required for the interaction of CHRNA3 with VCP/p97, this interaction also inhibits CHRNA3 ubiquitination by STUB1/CHIP and subsequently ERAD. Interacts with UBXN2A (via SEP domain), the interaction is required for the interaction of CHRNA3 in the STUB1:VCP:UBXN2A complex. Interacts with RIC3; which is required for proper folding and assembly. Interacts with LYPD6. In terms of processing, ubiquitinated; by STUB1/CHIP and thereafter degraded by the 26S proteosome complex.

It localises to the synaptic cell membrane. The protein resides in the cell membrane. The protein localises to the endoplasmic reticulum. It is found in the golgi apparatus. The catalysed reaction is Ca(2+)(in) = Ca(2+)(out). It carries out the reaction K(+)(in) = K(+)(out). It catalyses the reaction Na(+)(in) = Na(+)(out). Its activity is regulated as follows. Activated by a myriad of ligands such as acetylcholine, cytisine, nicotine, choline and epibatidine. The heteropentamer CHRNA3:CHRNB2 activity is blocked by alpha-conotoxins ImI, ImII, PnIA, GID and MII. The heteropentamer CHRNA3:CHRNB4 activity is blocked by the alpha-conotoxin ImI and AuIB. Functionally, component of neuronal acetylcholine receptors (nAChRs) that function as pentameric, ligand-gated cation channels with high calcium permeability among other activities. nAChRs are excitatory neurotrasnmitter receptors formed by a collection of nAChR subunits known to mediate synaptic transmission in the nervous system and the neuromuscular junction. Each nAchR subunit confers differential attributes to channel properties, including activation, deactivation and desensitization kinetics, pH sensitivity, cation permeability, and binding to allosteric modulators. CHRNA3 forms heteropentameric neuronal acetylcholine receptors with CHRNB2 and CHRNB4, with CHRNA5, and CHRNB3 as accesory subunits. CHRNA3:CHRNB4 being predominant in neurons of the autonomic ganglia, it is known as ganglionic nicotinic receptor. CHRNA3:CHRNB4 or CHRNA3:CHRNA5:CHRNB4 play also an important role in the habenulo-interpeduncular tract, modulating the mesolimbic dopamine system and affecting reward circuits and addiction. Hypothalamic CHRNA3:CHRNB4 nAChR activation by nicotine leads to activation of POMC neurons and a decrease in food intake. Also expressed in the urothelium where it modulates reflex bladder activity by increasing intracellular calcium through extracellular influx and basal ATP release. This Homo sapiens (Human) protein is Neuronal acetylcholine receptor subunit alpha-3.